The following is a 782-amino-acid chain: ATP-dependent RNA helicase MAK5 (782 aa).

Residues 1–22 show a composition bias toward basic residues; the sequence is MAKQGKNKVSKPRKPPTLKQKL. 2 disordered regions span residues 1-24 and 71-164; these read MAKQGKNKVSKPRKPPTLKQKLKK and FIVR…KDDK. Residues 71-88 are compositionally biased toward basic and acidic residues; sequence FIVRDNGKVENKSKKEET. The span at 96-147 shows a compositional bias: acidic residues; sequence MDVEDNETPEVEDEKPTEQEEEEEEEEEEEEEEEEEEEEEEFAGFEDDENNQ. The Q motif signature appears at 197-225; the sequence is EGDLGSSISAYTLYGLSQLDFKKPTPIQK. Positions 228 to 426 constitute a Helicase ATP-binding domain; the sequence is IPIALSGKDV…DRHQKGKSSS (199 aa). Residue 241 to 248 coordinates ATP; the sequence is ATTGSGKT. The DEAD box signature appears at 364 to 367; sequence DEAD. Residues 478-635 enclose the Helicase C-terminal domain; that stretch reads YLYYFLLMYK…DVKLLPIEMD (158 aa). The tract at residues 762–782 is disordered; the sequence is DLKGSKNKNKKIEKKRISKKK. Over residues 766–782 the composition is skewed to basic residues; it reads SKNKNKKIEKKRISKKK.

It belongs to the DEAD box helicase family. DDX24/MAK5 subfamily.

The protein localises to the nucleus. The protein resides in the nucleolus. The catalysed reaction is ATP + H2O = ADP + phosphate + H(+). Its function is as follows. ATP-binding RNA helicase involved in the biogenesis of 60S ribosomal subunits and is required for the normal formation of 25S and 5.8S rRNAs. The sequence is that of ATP-dependent RNA helicase MAK5 (MAK5) from Candida albicans (strain SC5314 / ATCC MYA-2876) (Yeast).